Here is a 148-residue protein sequence, read N- to C-terminus: Coactosin (148 aa).

An ADF-H domain is found at 1–134; sequence MSGFDLSEVA…VEDEIAAKIK (134 aa). The short motif at 71–76 is the F-loop; important for stable binding to G-actin and F-actin element; the sequence is DEESKR. Phosphoserine is present on S147.

It belongs to the actin-binding proteins ADF family. Coactosin subfamily. In terms of assembly, interacts with 14-3-3 protein 3. In terms of processing, phosphorylation at Ser-147 appears not to affect its binding to actin; however, it may regulate phagocytosis and motility.

Its subcellular location is the cytoplasm. The protein resides in the cell projection. It is found in the phagocytic cup. It localises to the pseudopodium. The protein localises to the cell membrane. Its subcellular location is the cytoskeleton. In terms of biological role, actin-binding protein which is involved in F-actin stabilization. May play a role during phagocytosis and pseudopod formation by contributing to the maintenance of F-actin. This chain is Coactosin, found in Entamoeba histolytica (strain ATCC 30459 / HM-1:IMSS / ABRM).